The chain runs to 142 residues: Ribosome maturation factor RimP (142 aa).

Belongs to the RimP family.

Its subcellular location is the cytoplasm. Its function is as follows. Required for maturation of 30S ribosomal subunits. The polypeptide is Ribosome maturation factor RimP (Nitratiruptor sp. (strain SB155-2)).